The primary structure comprises 688 residues: Elongation factor G (688 aa).

One can recognise a tr-type G domain in the interval 8–282; it reads EKTRNIGIMA…AIIDYLPSPM (275 aa). Residues 17–24, 81–85, and 135–138 each bind GTP; these read AHIDAGKT, DTPGH, and NKMD.

Belongs to the TRAFAC class translation factor GTPase superfamily. Classic translation factor GTPase family. EF-G/EF-2 subfamily.

Its subcellular location is the cytoplasm. Catalyzes the GTP-dependent ribosomal translocation step during translation elongation. During this step, the ribosome changes from the pre-translocational (PRE) to the post-translocational (POST) state as the newly formed A-site-bound peptidyl-tRNA and P-site-bound deacylated tRNA move to the P and E sites, respectively. Catalyzes the coordinated movement of the two tRNA molecules, the mRNA and conformational changes in the ribosome. The chain is Elongation factor G from Phytoplasma mali (strain AT).